Reading from the N-terminus, the 348-residue chain is Trans-L-3-hydroxyproline dehydratase (348 aa).

Catalysis depends on cysteine 101, which acts as the Proton acceptor. Residues glycine 102–histidine 103, aspartate 263, and glycine 268–serine 269 contribute to the substrate site.

It belongs to the proline racemase family. Homodimer.

It carries out the reaction trans-3-hydroxy-L-proline = 1-pyrroline-2-carboxylate + H2O. Its function is as follows. Catalyzes the dehydration of trans-3-hydroxy-L-proline to delta-1-pyrroline-2-carboxylate (Pyr2C). In Xenopus tropicalis (Western clawed frog), this protein is Trans-L-3-hydroxyproline dehydratase (l3hypdh).